We begin with the raw amino-acid sequence, 270 residues long: Putative carbamate hydrolase RutD (270 aa).

This sequence belongs to the AB hydrolase superfamily. Hydrolase RutD family.

It carries out the reaction carbamate + 2 H(+) = NH4(+) + CO2. Functionally, involved in pyrimidine catabolism. May facilitate the hydrolysis of carbamate, a reaction that can also occur spontaneously. In Escherichia coli (strain SMS-3-5 / SECEC), this protein is Putative carbamate hydrolase RutD.